Here is a 134-residue protein sequence, read N- to C-terminus: Small ribosomal subunit protein uS8c (134 aa).

The protein belongs to the universal ribosomal protein uS8 family. Part of the 30S ribosomal subunit.

Its subcellular location is the plastid. The protein localises to the chloroplast. Functionally, one of the primary rRNA binding proteins, it binds directly to 16S rRNA central domain where it helps coordinate assembly of the platform of the 30S subunit. The protein is Small ribosomal subunit protein uS8c (rps8) of Lepidium virginicum (Virginia pepperweed).